The following is a 291-amino-acid chain: Light-independent protochlorophyllide reductase iron-sulfur ATP-binding protein (291 aa).

ATP is bound by residues 10 to 15 and lysine 39; that span reads GIGKST. Serine 14 provides a ligand contact to Mg(2+). [4Fe-4S] cluster is bound by residues cysteine 95 and cysteine 129. 180-181 contacts ATP; that stretch reads NR.

The protein belongs to the NifH/BchL/ChlL family. Homodimer. Protochlorophyllide reductase is composed of three subunits; ChlL, ChlN and ChlB. It depends on [4Fe-4S] cluster as a cofactor.

It localises to the plastid. It is found in the chloroplast. It carries out the reaction chlorophyllide a + oxidized 2[4Fe-4S]-[ferredoxin] + 2 ADP + 2 phosphate = protochlorophyllide a + reduced 2[4Fe-4S]-[ferredoxin] + 2 ATP + 2 H2O. It functions in the pathway porphyrin-containing compound metabolism; chlorophyll biosynthesis (light-independent). In terms of biological role, component of the dark-operative protochlorophyllide reductase (DPOR) that uses Mg-ATP and reduced ferredoxin to reduce ring D of protochlorophyllide (Pchlide) to form chlorophyllide a (Chlide). This reaction is light-independent. The L component serves as a unique electron donor to the NB-component of the complex, and binds Mg-ATP. This is Light-independent protochlorophyllide reductase iron-sulfur ATP-binding protein from Pinus koraiensis (Korean pine).